Here is a 1316-residue protein sequence, read N- to C-terminus: Myosin-5 (1316 aa).

Over residues 1 to 12 the composition is skewed to basic residues; it reads MAIVKRGGRTKT. A disordered region spans residues 1-29; that stretch reads MAIVKRGGRTKTKQQQVPAKSSGGGSSGG. In terms of domain architecture, Myosin motor spans 43–731; the sequence is VGVSDLTLLS…TLFALEDMRD (689 aa). 136-143 contacts ATP; the sequence is GESGAGKT. S366 is subject to Phosphoserine. Positions 414 to 497 are actin-binding; it reads SIGILDIYGF…PGLFAALNDS (84 aa). 2 IQ domains span residues 735-755 and 756-781; these read HNMAARIQRAWRRYVKRKEDA and AKTIQNAWRIKKHGNQFEQFRDYGNG. One can recognise a TH1 domain in the interval 789-981; the sequence is RRRMSMLGSR…TVSVKQGLPA (193 aa). Disordered regions lie at residues 964–1154 and 1209–1316; these read NGDH…PTLV and DYLK…DDDW. Polar residues-rich tracts occupy residues 971-984 and 1018-1030; these read GTVSVKQGLPASSK and PRYNQPTPVANSG. The segment covering 1042–1065 has biased composition (low complexity); sequence QPQQYQPQQSQQQTPYPTQSSIPS. Residues 1097–1106 are compositionally biased toward polar residues; sequence SPTQQRQTPA. Positions 1117-1129 are enriched in low complexity; it reads ASTTIATTTSHTS. Residues 1137–1153 are compositionally biased toward pro residues; the sequence is PAPPVKKTAPPPPPPTL. The 61-residue stretch at 1156–1216 folds into the SH3 domain; that stretch reads PKFPTYKAMF…PIDYLKECSP (61 aa). The span at 1223–1232 shows a compositional bias: pro residues; it reads APPPPPPPPA. A compositionally biased stretch (low complexity) spans 1233 to 1268; sequence ATASAGANGASNPISTTTSTNTTTSSHTTNATSNGS. The span at 1305-1316 shows a compositional bias: acidic residues; sequence SDDEEEEDDDDW.

This sequence belongs to the TRAFAC class myosin-kinesin ATPase superfamily. Myosin family. Phosphorylation of the TEDS site (Ser-366) is required for the polarization of the actin cytoskeleton. Phosphorylation probably activates the myosin-I ATPase activity.

It localises to the cytoplasm. The protein localises to the cytoskeleton. It is found in the actin patch. Its function is as follows. Type-I myosin implicated in the organization of the actin cytoskeleton. Required for proper actin cytoskeleton polarization and for the internalization step in endocytosis. At the cell cortex, assembles in patch-like structures together with proteins from the actin-polymerizing machinery and promotes actin assembly. Functions as actin nucleation-promoting factor (NPF) for the Arp2/3 complex. Plays a role in chitin deposition in the cell wall, in determination of the budding pattern, and is required for hyphae formation. This is Myosin-5 (MYO5) from Candida albicans (strain SC5314 / ATCC MYA-2876) (Yeast).